We begin with the raw amino-acid sequence, 623 residues long: Chaperone protein DnaK (623 aa).

A Phosphothreonine; by autocatalysis modification is found at threonine 175. A disordered region spans residues 580 to 623; the sequence is PEGAQGAGFDPNNMGGANAGNASAGNDKKDDNVVDADFKVEDDK. The segment covering 591 to 604 has biased composition (low complexity); it reads NNMGGANAGNASAG. The segment covering 605–623 has biased composition (basic and acidic residues); that stretch reads NDKKDDNVVDADFKVEDDK.

This sequence belongs to the heat shock protein 70 family.

Its function is as follows. Acts as a chaperone. The protein is Chaperone protein DnaK of Clostridium botulinum (strain Hall / ATCC 3502 / NCTC 13319 / Type A).